Consider the following 404-residue polypeptide: Phosphoglycerate kinase (404 aa).

Substrate-binding positions include 21–23 (DFN), R38, 61–64 (HLGR), R126, and R159. Residues K210, E333, and 360–363 (GGDS) contribute to the ATP site.

This sequence belongs to the phosphoglycerate kinase family. As to quaternary structure, monomer.

Its subcellular location is the cytoplasm. The enzyme catalyses (2R)-3-phosphoglycerate + ATP = (2R)-3-phospho-glyceroyl phosphate + ADP. Its pathway is carbohydrate degradation; glycolysis; pyruvate from D-glyceraldehyde 3-phosphate: step 2/5. In Acidobacterium capsulatum (strain ATCC 51196 / DSM 11244 / BCRC 80197 / JCM 7670 / NBRC 15755 / NCIMB 13165 / 161), this protein is Phosphoglycerate kinase.